Here is a 175-residue protein sequence, read N- to C-terminus: GTP-dependent dephospho-CoA kinase (175 aa).

5 residues coordinate GTP: Asp48, Val49, Val50, Asp66, and Glu124.

It belongs to the GTP-dependent DPCK family.

It carries out the reaction 3'-dephospho-CoA + GTP = GDP + CoA + H(+). The protein operates within cofactor biosynthesis; coenzyme A biosynthesis. Catalyzes the GTP-dependent phosphorylation of the 3'-hydroxyl group of dephosphocoenzyme A to form coenzyme A (CoA). This is GTP-dependent dephospho-CoA kinase from Thermofilum pendens (strain DSM 2475 / Hrk 5).